The following is a 373-amino-acid chain: Chaperone protein DnaJ (373 aa).

One can recognise a J domain in the interval 4–69 (SYYEILEITQ…EKRAIYDRYG (66 aa)). A CR-type zinc finger spans residues 135 to 212 (GCKKNIDFTY…CKGLGYNESK (78 aa)). Zn(2+) is bound by residues Cys-148, Cys-151, Cys-164, Cys-167, Cys-186, Cys-189, Cys-200, and Cys-203. CXXCXGXG motif repeat units lie at residues 148-155 (CKTCNGTG), 164-171 (CPKCQGRG), 186-193 (CPDCQGIG), and 200-207 (CSDCKGLG).

It belongs to the DnaJ family. As to quaternary structure, homodimer. It depends on Zn(2+) as a cofactor.

Its subcellular location is the cytoplasm. Participates actively in the response to hyperosmotic and heat shock by preventing the aggregation of stress-denatured proteins and by disaggregating proteins, also in an autonomous, DnaK-independent fashion. Unfolded proteins bind initially to DnaJ; upon interaction with the DnaJ-bound protein, DnaK hydrolyzes its bound ATP, resulting in the formation of a stable complex. GrpE releases ADP from DnaK; ATP binding to DnaK triggers the release of the substrate protein, thus completing the reaction cycle. Several rounds of ATP-dependent interactions between DnaJ, DnaK and GrpE are required for fully efficient folding. Also involved, together with DnaK and GrpE, in the DNA replication of plasmids through activation of initiation proteins. In Campylobacter jejuni subsp. jejuni serotype O:2 (strain ATCC 700819 / NCTC 11168), this protein is Chaperone protein DnaJ.